Here is a 985-residue protein sequence, read N- to C-terminus: Ras and Rab interactor 3 (985 aa).

The tract at residues 1 to 24 (MIRHAGAPARGDPTGPVPVVGKGE) is disordered. The region spanning 63-158 (WLQLSLGQAE…LLPFTLRLPQ (96 aa)) is the SH2 domain. Disordered stretches follow at residues 183-202 (SLNPPQERGKPAEPPRDRAP), 251-293 (QPPL…QPCS), and 315-531 (PPVP…KGSL). Positions 189-201 (ERGKPAEPPRDRA) are enriched in basic and acidic residues. Pro residues-rich tracts occupy residues 278-288 (RRPPPPPPVLP) and 315-336 (PPVPAPHVTPHAPGPPDHPNQP). The span at 424 to 442 (DTPRESTEQGQDTEVKASD) shows a compositional bias: basic and acidic residues. An interaction with RAB5B region spans residues 587-732 (FSSMFHAFLS…TTTDLGVTTS (146 aa)). One can recognise a VPS9 domain in the interval 703–846 (HSKDGSLQQL…IKSYDKITVT (144 aa)). The 87-residue stretch at 877–963 (QDFICVSYLE…RDFHFVYRPL (87 aa)) folds into the Ras-associating domain.

Belongs to the RIN (Ras interaction/interference) family. Interacts with CD2AP, RAB5B, RAB31 and BIN1. As to expression, widely expressed.

The protein resides in the cytoplasm. It is found in the cytoplasmic vesicle. It localises to the early endosome. Functionally, ras effector protein that functions as a guanine nucleotide exchange (GEF) for RAB5B and RAB31, by exchanging bound GDP for free GTP. Required for normal RAB31 function. The chain is Ras and Rab interactor 3 (RIN3) from Homo sapiens (Human).